The chain runs to 567 residues: Urease subunit alpha (567 aa).

One can recognise a Urease domain in the interval 129-567 (GGIDAHIHFI…LPLAQLYCLF (439 aa)). Ni(2+)-binding residues include His134, His136, and Lys217. Lys217 is modified (N6-carboxylysine). Residue His219 coordinates substrate. Ni(2+)-binding residues include His246 and His272. His320 functions as the Proton donor in the catalytic mechanism. A Ni(2+)-binding site is contributed by Asp360.

Belongs to the metallo-dependent hydrolases superfamily. Urease alpha subunit family. As to quaternary structure, heterotrimer of UreA (gamma), UreB (beta) and UreC (alpha) subunits. Three heterotrimers associate to form the active enzyme. It depends on Ni cation as a cofactor. Post-translationally, carboxylation allows a single lysine to coordinate two nickel ions.

It localises to the cytoplasm. It carries out the reaction urea + 2 H2O + H(+) = hydrogencarbonate + 2 NH4(+). It participates in nitrogen metabolism; urea degradation; CO(2) and NH(3) from urea (urease route): step 1/1. In Alteromonas mediterranea (strain DSM 17117 / CIP 110805 / LMG 28347 / Deep ecotype), this protein is Urease subunit alpha.